We begin with the raw amino-acid sequence, 344 residues long: 5-formaminoimidazole-4-carboxamide-1-(beta)-D-ribofuranosyl 5'-monophosphate synthetase (344 aa).

5-amino-1-(5-phospho-beta-D-ribosyl)imidazole-4-carboxamide-binding residues include His31 and Ser96. Residues 130–324 enclose the ATP-grasp domain; the sequence is MELLQRAGVP…YFDRPMDMGE (195 aa). Residues 153 to 198 and Glu220 each bind ATP; that span reads PVIV…VPAY. Position 240 (Asn240) interacts with 5-amino-1-(5-phospho-beta-D-ribosyl)imidazole-4-carboxamide. Residues Glu279 and Glu292 each coordinate Mg(2+).

It belongs to the phosphohexose mutase family. Mg(2+) is required as a cofactor. Requires Mn(2+) as cofactor.

It catalyses the reaction 5-amino-1-(5-phospho-beta-D-ribosyl)imidazole-4-carboxamide + formate + ATP = 5-formamido-1-(5-phospho-D-ribosyl)imidazole-4-carboxamide + ADP + phosphate. Its pathway is purine metabolism; IMP biosynthesis via de novo pathway; 5-formamido-1-(5-phospho-D-ribosyl)imidazole-4-carboxamide from 5-amino-1-(5-phospho-D-ribosyl)imidazole-4-carboxamide (formate route): step 1/1. Functionally, catalyzes the ATP- and formate-dependent formylation of 5-aminoimidazole-4-carboxamide-1-beta-d-ribofuranosyl 5'-monophosphate (AICAR) to 5-formaminoimidazole-4-carboxamide-1-beta-d-ribofuranosyl 5'-monophosphate (FAICAR) in the absence of folates. This chain is 5-formaminoimidazole-4-carboxamide-1-(beta)-D-ribofuranosyl 5'-monophosphate synthetase, found in Pyrobaculum neutrophilum (strain DSM 2338 / JCM 9278 / NBRC 100436 / V24Sta) (Thermoproteus neutrophilus).